We begin with the raw amino-acid sequence, 126 residues long: Large ribosomal subunit protein bL12 (126 aa).

The protein belongs to the bacterial ribosomal protein bL12 family. Homodimer. Part of the ribosomal stalk of the 50S ribosomal subunit. Forms a multimeric L10(L12)X complex, where L10 forms an elongated spine to which 2 to 4 L12 dimers bind in a sequential fashion. Binds GTP-bound translation factors.

Forms part of the ribosomal stalk which helps the ribosome interact with GTP-bound translation factors. Is thus essential for accurate translation. The polypeptide is Large ribosomal subunit protein bL12 (Chlorobium phaeobacteroides (strain BS1)).